Consider the following 138-residue polypeptide: Acidic phospholipase A2 BITP01A (138 aa).

The first 16 residues, 1 to 16 (MRTLWIMAVLLVGVEG), serve as a signal peptide directing secretion. 7 cysteine pairs are disulfide-bonded: cysteine 42–cysteine 131, cysteine 44–cysteine 60, cysteine 59–cysteine 111, cysteine 65–cysteine 138, cysteine 66–cysteine 104, cysteine 73–cysteine 97, and cysteine 91–cysteine 102. Ca(2+) contacts are provided by tyrosine 43, glycine 45, and glycine 47. Histidine 63 is a catalytic residue. Aspartate 64 serves as a coordination point for Ca(2+). Aspartate 105 is an active-site residue.

Ca(2+) serves as cofactor. Expressed by the venom gland.

It is found in the secreted. The catalysed reaction is a 1,2-diacyl-sn-glycero-3-phosphocholine + H2O = a 1-acyl-sn-glycero-3-phosphocholine + a fatty acid + H(+). Its function is as follows. Snake venom phospholipase A2 (PLA2) that induces edema in mice, produces neuromuscular blockade in chick biventer cervicis, increases CK release and produces myonecrosis. PLA2 catalyzes the calcium-dependent hydrolysis of the 2-acyl groups in 3-sn-phosphoglycerides. The polypeptide is Acidic phospholipase A2 BITP01A (Bothrops insularis (Golden lancehead)).